Here is a 321-residue protein sequence, read N- to C-terminus: AA9 family lytic polysaccharide monooxygenase D (321 aa).

The first 21 residues, 1 to 21 (MRSTIVATFAAGLVVASLVAA), serve as a signal peptide directing secretion. Residue histidine 22 coordinates Cu(2+). 2 disulfide bridges follow: cysteine 75/cysteine 192 and cysteine 116/cysteine 120. N-linked (GlcNAc...) asparagine glycosylation is present at asparagine 78. Histidine 105 serves as a coordination point for Cu(2+). Residue asparagine 152 is glycosylated (N-linked (GlcNAc...) asparagine). O2 is bound by residues histidine 178 and glutamine 187. A Cu(2+)-binding site is contributed by tyrosine 189. An N-linked (GlcNAc...) asparagine glycan is attached at asparagine 266.

Belongs to the polysaccharide monooxygenase AA9 family. Requires Cu(2+) as cofactor.

It is found in the secreted. It catalyses the reaction [(1-&gt;4)-beta-D-glucosyl]n+m + reduced acceptor + O2 = 4-dehydro-beta-D-glucosyl-[(1-&gt;4)-beta-D-glucosyl]n-1 + [(1-&gt;4)-beta-D-glucosyl]m + acceptor + H2O.. Functionally, lytic polysaccharide monooxygenase (LPMO) that depolymerizes crystalline and amorphous polysaccharides via the oxidation of scissile alpha- or beta-(1-4)-glycosidic bonds, yielding C1 or C4 oxidation products. Catalysis by LPMOs requires the reduction of the active-site copper from Cu(II) to Cu(I) by a reducing agent and H(2)O(2) or O(2) as a cosubstrate. This chain is AA9 family lytic polysaccharide monooxygenase D, found in Geotrichum candidum (Oospora lactis).